The chain runs to 141 residues: Large ribosomal subunit protein uL11 (141 aa).

The protein belongs to the universal ribosomal protein uL11 family. In terms of assembly, part of the ribosomal stalk of the 50S ribosomal subunit. Interacts with L10 and the large rRNA to form the base of the stalk. L10 forms an elongated spine to which L12 dimers bind in a sequential fashion forming a multimeric L10(L12)X complex. In terms of processing, one or more lysine residues are methylated.

Forms part of the ribosomal stalk which helps the ribosome interact with GTP-bound translation factors. The chain is Large ribosomal subunit protein uL11 from Pelodictyon phaeoclathratiforme (strain DSM 5477 / BU-1).